A 120-amino-acid chain; its full sequence is Large ribosomal subunit protein uL18 (120 aa).

This sequence belongs to the universal ribosomal protein uL18 family. As to quaternary structure, part of the 50S ribosomal subunit; part of the 5S rRNA/L5/L18/L25 subcomplex. Contacts the 5S and 23S rRNAs.

Functionally, this is one of the proteins that bind and probably mediate the attachment of the 5S RNA into the large ribosomal subunit, where it forms part of the central protuberance. This Brucella anthropi (strain ATCC 49188 / DSM 6882 / CCUG 24695 / JCM 21032 / LMG 3331 / NBRC 15819 / NCTC 12168 / Alc 37) (Ochrobactrum anthropi) protein is Large ribosomal subunit protein uL18.